Consider the following 443-residue polypeptide: Acyl transferase 10 (443 aa).

Catalysis depends on proton acceptor residues His-182 and Asp-386.

Belongs to the plant acyltransferase family.

Involved in the incorporation of ferulate into the cell wall. May act as arabinoxylan feruloyl transferase. May function as p-coumaroyl-CoA transferase involved in glucuronoarabinoxylan modification. This chain is Acyl transferase 10, found in Oryza sativa subsp. japonica (Rice).